The sequence spans 958 residues: MAKVRVHELAKELGITSKDAVTKLQELGEFVRSASSTIEAPVVKKLRDAYPGAGAAKAAAPAAAPKAPAASRPAAPAPGPAAPKAPAPAPAAPAPAAPAAAAPAAAAPAAPAPAAPAAPAASTPVSAKPGARPAPKAETPAPARQGGQAPRPGGPRPGNNPFATSQGMPRGRGGDGDRPPRPGNNPFAPSQGMPRGERRNDGERPGGPRPAAGAGGPRPAAGTGGPRPGAPRPGAPRPGAPRPAGGPGAGNRPTPGMMPNRTERPAPGGAGRPGGAGRPGGGPGRPGGAPGAGTGGGAPAGGGFGKGGRGRGGTQGAFGKGGAGRGKQRKSKRAKRQELEQMSAPSLGGVSVPRGDGETIIRLRRGSSITDFAEKIDANPASLVTVLFHLGEMATATQSLDEDTFGLLGAELGYKLQVVSPEDEERELLDQFDINIQDELDAEGDDVLEARAPVVTVMGHVDHGKTRLLDAIRNSNVVAGEHGGITQHIGAYQISHVHEGKARDITFIDTPGHEAFTAMRARGAKVTDIAILVVAADDGVMPQTVEALNHAQAANVPIVVAVNKIDKEGANPDKVKGQLTEYGLVPEEYGGDTMFVEVSARQNLNIDELIDAVLLTADAALDLRANPDKDARGIAIEANLDKGRGAVATVLVQSGTLAVGDTIVAGTAHGRVRAMFDENGEALDVALPSRPVQVLGLSNVPRAGDTFLVTPDERTARQIAEKREAADRNAALAKRRKRISLEDFDQAVAEGKIDTLNLILKGDVSGAVEALEDALLKIDVGDDDVQLRVIHRGVGAITQNDVNLATVDNAIIIGFNVKPAERVAELADREGVDMRFYSVIYAAIDDIEMALKGMLKPEYEEVQLGTAEVREVFRSSKFGNIAGSIVRTGIIRRNSKARVSRDGKVIGDNLTVETLKRFKDDATEVRTDFECGIGLGSFNDINEGDIIETFEMREKPRS.

2 disordered regions span residues 67-95 and 111-355; these read APAA…APAP and PAPA…VPRG. The span at 75–95 shows a compositional bias: pro residues; sequence APAPGPAAPKAPAPAPAAPAP. The span at 140–161 shows a compositional bias: low complexity; the sequence is PAPARQGGQAPRPGGPRPGNNP. Residues 195-206 show a composition bias toward basic and acidic residues; the sequence is RGERRNDGERPG. A compositionally biased stretch (low complexity) spans 209–221; the sequence is RPAAGAGGPRPAA. A compositionally biased stretch (pro residues) spans 228–241; sequence PGAPRPGAPRPGAP. Over residues 268-325 the composition is skewed to gly residues; that stretch reads GGAGRPGGAGRPGGGPGRPGGAPGAGTGGGAPAGGGFGKGGRGRGGTQGAFGKGGAGR. A compositionally biased stretch (basic residues) spans 326–335; sequence GKQRKSKRAK. The region spanning 450–621 is the tr-type G domain; sequence ARAPVVTVMG…AVLLTADAAL (172 aa). Positions 459–466 are G1; the sequence is GHVDHGKT. 459 to 466 is a GTP binding site; the sequence is GHVDHGKT. Positions 484-488 are G2; sequence GITQH. The segment at 509-512 is G3; sequence DTPG. GTP is bound by residues 509–513 and 563–566; these read DTPGH and NKID. Positions 563-566 are G4; sequence NKID. Positions 599-601 are G5; sequence SAR.

It belongs to the TRAFAC class translation factor GTPase superfamily. Classic translation factor GTPase family. IF-2 subfamily.

It localises to the cytoplasm. Its function is as follows. One of the essential components for the initiation of protein synthesis. Protects formylmethionyl-tRNA from spontaneous hydrolysis and promotes its binding to the 30S ribosomal subunits. Also involved in the hydrolysis of GTP during the formation of the 70S ribosomal complex. This chain is Translation initiation factor IF-2, found in Paenarthrobacter aurescens (strain TC1).